Reading from the N-terminus, the 337-residue chain is Phosphate acyltransferase (337 aa).

It belongs to the PlsX family. Homodimer. Probably interacts with PlsY.

It is found in the cytoplasm. It catalyses the reaction a fatty acyl-[ACP] + phosphate = an acyl phosphate + holo-[ACP]. Its pathway is lipid metabolism; phospholipid metabolism. Its function is as follows. Catalyzes the reversible formation of acyl-phosphate (acyl-PO(4)) from acyl-[acyl-carrier-protein] (acyl-ACP). This enzyme utilizes acyl-ACP as fatty acyl donor, but not acyl-CoA. This Latilactobacillus sakei subsp. sakei (strain 23K) (Lactobacillus sakei subsp. sakei) protein is Phosphate acyltransferase.